The following is a 151-amino-acid chain: MGEPILFLLILFIIGFIAKNQSLMIAVAILLIIKMVGMGEKWLPIVHEKGIHWGVTVITIAVLAPIATGEIGFRQLIASLQSLSAWIALLSGIFVALVAKGGVTLLATDPHMTAALVFGTIIAVSLFHGVAVGPLIGAGIAYMVMKVIEYF.

The next 4 membrane-spanning stretches (helical) occupy residues 5–25 (ILFL…SLMI), 53–73 (WGVT…EIGF), 86–106 (WIAL…VTLL), and 116–136 (LVFG…GPLI).

Belongs to the UPF0756 family.

Its subcellular location is the cell membrane. The sequence is that of UPF0756 membrane protein GWCH70_2680 from Geobacillus sp. (strain WCH70).